Here is a 270-residue protein sequence, read N- to C-terminus: Phosphatidylglycerol--prolipoprotein diacylglyceryl transferase (270 aa).

The next 4 helical transmembrane spans lie at 19-39 (FPVY…LWLA), 56-76 (LVLI…VIFE), 92-112 (QGGL…ILFA), and 116-136 (GVSF…GQAI). Arg-138 lines the a 1,2-diacyl-sn-glycero-3-phospho-(1'-sn-glycerol) pocket. Helical transmembrane passes span 178 to 198 (HPTF…LLAL), 206 to 226 (GELF…VEGL), and 236 to 256 (LRIA…FIIV).

Belongs to the Lgt family.

It localises to the cell membrane. It carries out the reaction L-cysteinyl-[prolipoprotein] + a 1,2-diacyl-sn-glycero-3-phospho-(1'-sn-glycerol) = an S-1,2-diacyl-sn-glyceryl-L-cysteinyl-[prolipoprotein] + sn-glycerol 1-phosphate + H(+). The protein operates within protein modification; lipoprotein biosynthesis (diacylglyceryl transfer). Catalyzes the transfer of the diacylglyceryl group from phosphatidylglycerol to the sulfhydryl group of the N-terminal cysteine of a prolipoprotein, the first step in the formation of mature lipoproteins. The protein is Phosphatidylglycerol--prolipoprotein diacylglyceryl transferase of Bacillus cereus (strain ZK / E33L).